Consider the following 407-residue polypeptide: Methylthioribose kinase (407 aa).

ATP-binding positions include Asn-40, Lys-57, and 111-113 (EDL). A substrate-binding site is contributed by Asp-229. Residue 246-248 (DAE) coordinates ATP. Arg-344 provides a ligand contact to substrate.

It belongs to the methylthioribose kinase family. As to quaternary structure, homodimer.

The enzyme catalyses 5-(methylsulfanyl)-D-ribose + ATP = 5-(methylsulfanyl)-alpha-D-ribose 1-phosphate + ADP + H(+). Its pathway is amino-acid biosynthesis; L-methionine biosynthesis via salvage pathway; S-methyl-5-thio-alpha-D-ribose 1-phosphate from S-methyl-5'-thioadenosine (hydrolase route): step 2/2. Catalyzes the phosphorylation of methylthioribose into methylthioribose-1-phosphate. The chain is Methylthioribose kinase from Yersinia pseudotuberculosis serotype O:3 (strain YPIII).